Here is a 215-residue protein sequence, read N- to C-terminus: Sodium channel regulatory subunit beta-3 (215 aa).

The first 24 residues, 1–24, serve as a signal peptide directing secretion; the sequence is MPAFNRLLPLASLVLIYWVRVCFP. Residues 25–138 enclose the Ig-like C2-type domain; that stretch reads VCVEVPSETE…EAHRPFVKTT (114 aa). At 25-156 the chain is on the extracellular side; the sequence is VCVEVPSETE…EEAGEDFTSV (132 aa). Cystine bridges form between C26/C48 and C45/C120. N-linked (GlcNAc...) asparagine glycans are attached at residues N95, N109, N113, and N121. The chain crosses the membrane as a helical span at residues 157–178; the sequence is VSEIMMYILLVFLTLWLFIEMI. At 179-215 the chain is on the cytoplasmic side; it reads YCYRKVSKAEEAAQENASDYLAIPSENKENSVVPVEE.

This sequence belongs to the sodium channel auxiliary subunit SCN3B (TC 8.A.17) family. As to quaternary structure, a voltage-gated sodium (Nav) channel consists of an ion-conducting pore-forming alpha subunit functional on its own that is regulated by one or more beta subunits. Forms homodimers and homotrimers. SCN3B is non-covalently associated with alpha subunits and induces the formation of alpha subunit oligomers, including trimers. Interacts with SCN5A/Nav1.5; regulatory subunit of SCN5A/Nav1.5. Interacts with SCN7A/Nav2.1; probable regulatory subunit of SCN7A/Nav2.1. Interacts with SCN10A; regulatory subunit of SCN10A/Nav1.8. Interacts with NFASC; probably involved in targeting the sodium channels to the nodes of Ranvier. In terms of processing, intramolecular disulfide bonds favor the voltage-gated sodium channel oligomeric complex assembly. N-glycosylated.

It localises to the cell membrane. In terms of biological role, regulatory subunit of multiple voltage-gated sodium (Nav) channels directly mediating the depolarization of excitable membranes. Navs, also called VGSCs (voltage-gated sodium channels) or VDSCs (voltage-dependent sodium channels), operate by switching between closed and open conformations depending on the voltage difference across the membrane. In the open conformation they allow Na(+) ions to selectively pass through the pore, along their electrochemical gradient. The influx of Na+ ions provokes membrane depolarization, initiating the propagation of electrical signals throughout cells and tissues. The accessory beta subunits participate in localization and functional modulation of the Nav channels. Modulates the activity of SCN2A/Nav1.2, causing a hyperpolarizing shift in the voltage-dependence of inactivation of the channel and increasing the fraction of channels operating in the fast gating mode. Modulates the activity of SCN5A/Nav1.5. Could also regulate the atypical sodium channel SCN7A/Nav2.1. Modulates the activity of SCN10A/Nav1.8, regulating its oligomerization and accelerating the recovery from inactivation. This chain is Sodium channel regulatory subunit beta-3, found in Mus musculus (Mouse).